The sequence spans 172 residues: ATP synthase subunit b (172 aa).

A helical transmembrane segment spans residues 13-33; it reads GINGGDILFQLVMFLILLALL.

The protein belongs to the ATPase B chain family. As to quaternary structure, F-type ATPases have 2 components, F(1) - the catalytic core - and F(0) - the membrane proton channel. F(1) has five subunits: alpha(3), beta(3), gamma(1), delta(1), epsilon(1). F(0) has three main subunits: a(1), b(2) and c(10-14). The alpha and beta chains form an alternating ring which encloses part of the gamma chain. F(1) is attached to F(0) by a central stalk formed by the gamma and epsilon chains, while a peripheral stalk is formed by the delta and b chains.

The protein resides in the cell membrane. In terms of biological role, f(1)F(0) ATP synthase produces ATP from ADP in the presence of a proton or sodium gradient. F-type ATPases consist of two structural domains, F(1) containing the extramembraneous catalytic core and F(0) containing the membrane proton channel, linked together by a central stalk and a peripheral stalk. During catalysis, ATP synthesis in the catalytic domain of F(1) is coupled via a rotary mechanism of the central stalk subunits to proton translocation. Functionally, component of the F(0) channel, it forms part of the peripheral stalk, linking F(1) to F(0). This Priestia megaterium (strain ATCC 12872 / QMB1551) (Bacillus megaterium) protein is ATP synthase subunit b.